We begin with the raw amino-acid sequence, 317 residues long: Ribosomal RNA large subunit methyltransferase F (317 aa).

This sequence belongs to the methyltransferase superfamily. METTL16/RlmF family.

The protein localises to the cytoplasm. The catalysed reaction is adenosine(1618) in 23S rRNA + S-adenosyl-L-methionine = N(6)-methyladenosine(1618) in 23S rRNA + S-adenosyl-L-homocysteine + H(+). Its function is as follows. Specifically methylates the adenine in position 1618 of 23S rRNA. The sequence is that of Ribosomal RNA large subunit methyltransferase F from Pseudomonas putida (strain ATCC 700007 / DSM 6899 / JCM 31910 / BCRC 17059 / LMG 24140 / F1).